The primary structure comprises 153 residues: Large ribosomal subunit protein uL30 (153 aa).

Belongs to the universal ribosomal protein uL30 family. As to quaternary structure, part of the 50S ribosomal subunit.

The protein is Large ribosomal subunit protein uL30 of Metallosphaera sedula (strain ATCC 51363 / DSM 5348 / JCM 9185 / NBRC 15509 / TH2).